The primary structure comprises 319 residues: ADP-L-glycero-D-manno-heptose-6-epimerase (319 aa).

NADP(+) contacts are provided by residues 10 to 11, 31 to 32, Lys-38, Lys-53, and 75 to 79; these read FI, DD, and EGACS. The active-site Proton acceptor is the Tyr-139. Lys-143 serves as a coordination point for NADP(+). Asn-168 contributes to the substrate binding site. The NADP(+) site is built by Val-169 and Lys-177. Catalysis depends on Lys-177, which acts as the Proton acceptor. Substrate-binding positions include Ser-179, His-186, 200–203, Arg-213, and Tyr-281; that span reads FEGA.

It belongs to the NAD(P)-dependent epimerase/dehydratase family. HldD subfamily. In terms of assembly, homopentamer. The cofactor is NADP(+).

The enzyme catalyses ADP-D-glycero-beta-D-manno-heptose = ADP-L-glycero-beta-D-manno-heptose. The protein operates within nucleotide-sugar biosynthesis; ADP-L-glycero-beta-D-manno-heptose biosynthesis; ADP-L-glycero-beta-D-manno-heptose from D-glycero-beta-D-manno-heptose 7-phosphate: step 4/4. In terms of biological role, catalyzes the interconversion between ADP-D-glycero-beta-D-manno-heptose and ADP-L-glycero-beta-D-manno-heptose via an epimerization at carbon 6 of the heptose. This Aromatoleum aromaticum (strain DSM 19018 / LMG 30748 / EbN1) (Azoarcus sp. (strain EbN1)) protein is ADP-L-glycero-D-manno-heptose-6-epimerase.